The following is a 521-amino-acid chain: Methionine--tRNA ligase (521 aa).

Positions 14–24 (YYSSGNPHIGH) match the 'HIGH' region motif. Zn(2+) contacts are provided by cysteine 129, cysteine 132, cysteine 151, and histidine 155. Positions 306–310 (KMSKS) match the 'KMSKS' region motif. ATP is bound at residue lysine 309.

This sequence belongs to the class-I aminoacyl-tRNA synthetase family. MetG type 2A subfamily. As to quaternary structure, monomer. It depends on Zn(2+) as a cofactor.

It is found in the cytoplasm. The enzyme catalyses tRNA(Met) + L-methionine + ATP = L-methionyl-tRNA(Met) + AMP + diphosphate. Its function is as follows. Is required not only for elongation of protein synthesis but also for the initiation of all mRNA translation through initiator tRNA(fMet) aminoacylation. This Ureaplasma parvum serovar 3 (strain ATCC 700970) protein is Methionine--tRNA ligase.